The following is a 662-amino-acid chain: MNQFKVISKFNPTGDQPKAIKSIAKGIEKGEKFQTLIGVTGSGKTFTMANIIEKAQKPTLVLAHNKTLAAQLCSEFREFFPNNAVEYFVSYYDYYQPEAYVAQSDTYIEKDASINDEIDKLRHSATSALFERKDVIIVASVSCIYGLGNPEEYKKLTISLREGMEKDRDEIIKKLVEIQYERNDIDFSRGTFRVKGDVLDIFPASSSSKAIRVEFFGDEIDRIKEFDVLTGETITKLKHISIFPASHFATSKDRLEIAIKNIEEELEERVKELVSQDKILEAQRLKQRTNFDIEMMREVGYCTGIENYSRVLDGRAKGTPPQTLLDYFPQDFLLFIDESHVTLPQVKAMQAGDKSRKDSLVEYGFRLPCAYDNRPLTFKEFENKLNQIVFVSATPAKYELEYSTNTAEQVIRPTGLLDPEIIVKPVKGQIDDLYTSIQETIKKGFRILVTTLTKKMAEDLTDYLKEMGVKTRYLHSDIDTIERMKIIHDLRKGEFHVLVGINLLREGLDIPEVALVTILDADKEGFLRSETSLIQTVGRAARNSESKVIMYGDVITKSMEKTIKETNRRRKIQMEYNEKHGIVPKTIIKDIREVIQISDIAEERKEYDNLNEALKSYNNDIDKLIEKYEEEMREAAQNLQFEKAAHLRDVIYKLKRDKETEL.

A Helicase ATP-binding domain is found at 25-182 (KGIEKGEKFQ…KKLVEIQYER (158 aa)). 38–45 (GVTGSGKT) provides a ligand contact to ATP. The short motif at 91 to 114 (YYDYYQPEAYVAQSDTYIEKDASI) is the Beta-hairpin element. The Helicase C-terminal domain occupies 429–595 (QIDDLYTSIQ…TIIKDIREVI (167 aa)). Positions 622–657 (DKLIEKYEEEMREAAQNLQFEKAAHLRDVIYKLKRD) constitute a UVR domain.

The protein belongs to the UvrB family. In terms of assembly, forms a heterotetramer with UvrA during the search for lesions. Interacts with UvrC in an incision complex.

It localises to the cytoplasm. Its function is as follows. The UvrABC repair system catalyzes the recognition and processing of DNA lesions. A damage recognition complex composed of 2 UvrA and 2 UvrB subunits scans DNA for abnormalities. Upon binding of the UvrA(2)B(2) complex to a putative damaged site, the DNA wraps around one UvrB monomer. DNA wrap is dependent on ATP binding by UvrB and probably causes local melting of the DNA helix, facilitating insertion of UvrB beta-hairpin between the DNA strands. Then UvrB probes one DNA strand for the presence of a lesion. If a lesion is found the UvrA subunits dissociate and the UvrB-DNA preincision complex is formed. This complex is subsequently bound by UvrC and the second UvrB is released. If no lesion is found, the DNA wraps around the other UvrB subunit that will check the other stand for damage. This Clostridium botulinum (strain 657 / Type Ba4) protein is UvrABC system protein B.